Consider the following 469-residue polypeptide: Neuraminidase (469 aa).

Residues methionine 1–threonine 9 are Intravirion-facing. A helical transmembrane segment spans residues isoleucine 10–valine 30. Residues glycine 11–valine 33 form an involved in apical transport and lipid raft association region. The Virion surface portion of the chain corresponds to threonine 31 to isoleucine 469. Residues histidine 36–serine 88 are hypervariable stalk region. N-linked (GlcNAc...) asparagine; by host glycosylation is found at asparagine 61, asparagine 69, asparagine 70, and asparagine 86. Residues glutamine 91 to isoleucine 469 are head of neuraminidase. Intrachain disulfides connect cysteine 92/cysteine 417, cysteine 124/cysteine 129, cysteine 183/cysteine 230, cysteine 232/cysteine 237, cysteine 278/cysteine 291, cysteine 280/cysteine 289, cysteine 318/cysteine 337, and cysteine 421/cysteine 447. Arginine 118 provides a ligand contact to substrate. The N-linked (GlcNAc...) asparagine; by host glycan is linked to asparagine 146. The active-site Proton donor/acceptor is aspartate 151. Arginine 152 lines the substrate pocket. Residues asparagine 200 and asparagine 234 are each glycosylated (N-linked (GlcNAc...) asparagine; by host). A substrate-binding site is contributed by glutamate 276–glutamate 277. Arginine 292 serves as a coordination point for substrate. Ca(2+) contacts are provided by aspartate 293, glycine 297, and aspartate 324. Residues glycine 323 to lysine 344 form a disordered region. Over residues lysine 334–glutamate 343 the composition is skewed to polar residues. Residue arginine 371 coordinates substrate. Asparagine 402 carries N-linked (GlcNAc...) asparagine; by host glycosylation. The Nucleophile role is filled by tyrosine 406.

It belongs to the glycosyl hydrolase 34 family. Homotetramer. The cofactor is Ca(2+). N-glycosylated.

Its subcellular location is the virion membrane. It localises to the host apical cell membrane. It catalyses the reaction Hydrolysis of alpha-(2-&gt;3)-, alpha-(2-&gt;6)-, alpha-(2-&gt;8)- glycosidic linkages of terminal sialic acid residues in oligosaccharides, glycoproteins, glycolipids, colominic acid and synthetic substrates.. Inhibited by the neuraminidase inhibitors zanamivir (Relenza) and oseltamivir (Tamiflu). These drugs interfere with the release of progeny virus from infected cells and are effective against all influenza strains. Resistance to neuraminidase inhibitors is quite rare. Its function is as follows. Catalyzes the removal of terminal sialic acid residues from viral and cellular glycoconjugates. Cleaves off the terminal sialic acids on the glycosylated HA during virus budding to facilitate virus release. Additionally helps virus spread through the circulation by further removing sialic acids from the cell surface. These cleavages prevent self-aggregation and ensure the efficient spread of the progeny virus from cell to cell. Otherwise, infection would be limited to one round of replication. Described as a receptor-destroying enzyme because it cleaves a terminal sialic acid from the cellular receptors. May facilitate viral invasion of the upper airways by cleaving the sialic acid moieties on the mucin of the airway epithelial cells. Likely to plays a role in the budding process through its association with lipid rafts during intracellular transport. May additionally display a raft-association independent effect on budding. Plays a role in the determination of host range restriction on replication and virulence. Sialidase activity in late endosome/lysosome traffic seems to enhance virus replication. The polypeptide is Neuraminidase (Influenza A virus (strain A/Swine/Hong Kong/3/1976 H3N2)).